A 266-amino-acid polypeptide reads, in one-letter code: MSRIAQAFQRAQAQNRAAFIAYLCAGDPNFDTSLAACRAVITSGVDLLELGVPFSDPLADGLTNQLAAQRALESGMTAADVFRLVRRIREFSEVPIVFYTYYNLVFAHGIDAYVRAAKEAGVDGLLTLDLPPEESDEVSAACRAHGVQSVYIVAPTSPAERIAKIAQAATGFIYYVSREGVTGVQERVAANIPEAVAAIRRHTALPVVVGFGISNREQVRQVAAVADGVVVGSALVNCIRENLGSPERITAKLAAVAGDLVAGTKR.

Active-site proton acceptor residues include Glu-49 and Asp-60.

This sequence belongs to the TrpA family. As to quaternary structure, tetramer of two alpha and two beta chains.

It catalyses the reaction (1S,2R)-1-C-(indol-3-yl)glycerol 3-phosphate + L-serine = D-glyceraldehyde 3-phosphate + L-tryptophan + H2O. Its pathway is amino-acid biosynthesis; L-tryptophan biosynthesis; L-tryptophan from chorismate: step 5/5. Its function is as follows. The alpha subunit is responsible for the aldol cleavage of indoleglycerol phosphate to indole and glyceraldehyde 3-phosphate. This Opitutus terrae (strain DSM 11246 / JCM 15787 / PB90-1) protein is Tryptophan synthase alpha chain.